The primary structure comprises 139 residues: NADPH-dependent 7-cyano-7-deazaguanine reductase (139 aa).

Cys-34 acts as the Thioimide intermediate in catalysis. Catalysis depends on Asp-41, which acts as the Proton donor. Substrate-binding positions include 56–58 (IEL) and 75–76 (HE).

The protein belongs to the GTP cyclohydrolase I family. QueF type 1 subfamily.

The protein localises to the cytoplasm. The enzyme catalyses 7-aminomethyl-7-carbaguanine + 2 NADP(+) = 7-cyano-7-deazaguanine + 2 NADPH + 3 H(+). Its pathway is tRNA modification; tRNA-queuosine biosynthesis. In terms of biological role, catalyzes the NADPH-dependent reduction of 7-cyano-7-deazaguanine (preQ0) to 7-aminomethyl-7-deazaguanine (preQ1). The protein is NADPH-dependent 7-cyano-7-deazaguanine reductase of Nitrosomonas europaea (strain ATCC 19718 / CIP 103999 / KCTC 2705 / NBRC 14298).